Consider the following 290-residue polypeptide: ATP synthase subunit a (290 aa).

The next 7 membrane-spanning stretches (helical) occupy residues Ala-54 to Phe-74, Ile-115 to Ile-135, Pro-136 to Pro-156, Phe-164 to Phe-184, Leu-201 to Ala-221, Val-233 to Trp-253, and Ala-254 to Val-274.

The protein belongs to the ATPase A chain family. F-type ATPases have 2 components, CF(1) - the catalytic core - and CF(0) - the membrane proton channel. CF(1) has five subunits: alpha(3), beta(3), gamma(1), delta(1), epsilon(1). CF(0) has three main subunits: a(1), b(2) and c(9-12). The alpha and beta chains form an alternating ring which encloses part of the gamma chain. CF(1) is attached to CF(0) by a central stalk formed by the gamma and epsilon chains, while a peripheral stalk is formed by the delta and b chains.

It is found in the cell inner membrane. In terms of biological role, key component of the proton channel; it plays a direct role in the translocation of protons across the membrane. The chain is ATP synthase subunit a from Stutzerimonas stutzeri (strain A1501) (Pseudomonas stutzeri).